Here is a 138-residue protein sequence, read N- to C-terminus: MRTFWIVALLLVGVEGNLLQFNKMIKMMTKKNAFPFYTSYGCYCGWGGRGRPKDATDRCCFVHDCCYEKLTNCSPKTDIYSYSWKRGVIICGKGTPCEKQICECDRAAAVCFRENLPTYKKRYMFYLDFLCTDPSEKC.

The signal sequence occupies residues 1–16 (MRTFWIVALLLVGVEG). Cystine bridges form between Cys-42–Cys-131, Cys-44–Cys-60, Cys-59–Cys-111, Cys-65–Cys-138, Cys-66–Cys-104, Cys-73–Cys-97, and Cys-91–Cys-102. Ca(2+) is bound by residues Tyr-43, Gly-45, and Gly-47. The active site involves His-63. Residue Asp-64 participates in Ca(2+) binding. Asp-105 is an active-site residue.

It belongs to the phospholipase A2 family. Group II subfamily. D49 sub-subfamily. As to quaternary structure, monomer. Binds to calmodulin. It depends on Ca(2+) as a cofactor. In terms of tissue distribution, expressed by the venom gland.

The protein localises to the secreted. It carries out the reaction a 1,2-diacyl-sn-glycero-3-phosphocholine + H2O = a 1-acyl-sn-glycero-3-phosphocholine + a fatty acid + H(+). Heparin and wedelolactone inhibit the myotoxic activity. The PLA2 inhibitor, para-bromophenacyl bromide (BPB), inhibits enzymatic and myotoxic activities. Snake venom phospholipase A2 (PLA2) that is myotoxic and displays moderate edema-inducing activity in rat paws. Does not show neurotoxic activity. PLA2 catalyzes the calcium-dependent hydrolysis of the 2-acyl groups in 3-sn-phosphoglycerides. This Crotalus viridis viridis (Prairie rattlesnake) protein is Basic phospholipase A2 Cvv-N6.